Consider the following 393-residue polypeptide: CCA-adding enzyme (393 aa).

Residues Gly-27 and Arg-30 each contribute to the ATP site. Residues Gly-27 and Arg-30 each coordinate CTP. Mg(2+) is bound by residues Asp-40 and Asp-42. ATP-binding residues include Arg-111, Asp-154, Arg-157, Arg-160, and Arg-163. CTP-binding residues include Arg-111, Asp-154, Arg-157, Arg-160, and Arg-163.

Belongs to the tRNA nucleotidyltransferase/poly(A) polymerase family. Bacterial CCA-adding enzyme type 3 subfamily. Homodimer. Mg(2+) is required as a cofactor.

The enzyme catalyses a tRNA precursor + 2 CTP + ATP = a tRNA with a 3' CCA end + 3 diphosphate. The catalysed reaction is a tRNA with a 3' CCA end + 2 CTP + ATP = a tRNA with a 3' CCACCA end + 3 diphosphate. Catalyzes the addition and repair of the essential 3'-terminal CCA sequence in tRNAs without using a nucleic acid template. Adds these three nucleotides in the order of C, C, and A to the tRNA nucleotide-73, using CTP and ATP as substrates and producing inorganic pyrophosphate. tRNA 3'-terminal CCA addition is required both for tRNA processing and repair. Also involved in tRNA surveillance by mediating tandem CCA addition to generate a CCACCA at the 3' terminus of unstable tRNAs. While stable tRNAs receive only 3'-terminal CCA, unstable tRNAs are marked with CCACCA and rapidly degraded. This Listeria monocytogenes serotype 4a (strain HCC23) protein is CCA-adding enzyme.